Reading from the N-terminus, the 136-residue chain is Putative pre-16S rRNA nuclease (136 aa).

Belongs to the YqgF nuclease family.

It localises to the cytoplasm. Could be a nuclease involved in processing of the 5'-end of pre-16S rRNA. The chain is Putative pre-16S rRNA nuclease from Francisella philomiragia subsp. philomiragia (strain ATCC 25017 / CCUG 19701 / FSC 153 / O#319-036).